Reading from the N-terminus, the 337-residue chain is Heat-inducible transcription repressor HrcA (337 aa).

Belongs to the HrcA family.

Its function is as follows. Negative regulator of class I heat shock genes (grpE-dnaK-dnaJ and groELS operons). Prevents heat-shock induction of these operons. The chain is Heat-inducible transcription repressor HrcA from Pseudarthrobacter chlorophenolicus (strain ATCC 700700 / DSM 12829 / CIP 107037 / JCM 12360 / KCTC 9906 / NCIMB 13794 / A6) (Arthrobacter chlorophenolicus).